The chain runs to 460 residues: 1-aminocyclopropane-1-carboxylate synthase 11 (460 aa).

2 residues coordinate substrate: Glu-45 and Tyr-83. At Lys-267 the chain carries N6-(pyridoxal phosphate)lysine.

Belongs to the class-I pyridoxal-phosphate-dependent aminotransferase family. In terms of assembly, homodimer and heterodimer. In vivo, the relevance of heterodimerization with other ACS enzymes is however unsure. Interacts with GRF3. Pyridoxal 5'-phosphate is required as a cofactor. May be processed at its C-terminus. As to expression, expressed in roots.

The enzyme catalyses S-adenosyl-L-methionine = 1-aminocyclopropane-1-carboxylate + S-methyl-5'-thioadenosine + H(+). It functions in the pathway alkene biosynthesis; ethylene biosynthesis via S-adenosyl-L-methionine; ethylene from S-adenosyl-L-methionine: step 1/2. 1-aminocyclopropane-1-carboxylate synthase (ACS) enzymes catalyze the conversion of S-adenosyl-L-methionine (SAM) into 1-aminocyclopropane-1-carboxylate (ACC), a direct precursor of ethylene. The protein is 1-aminocyclopropane-1-carboxylate synthase 11 (ACS11) of Arabidopsis thaliana (Mouse-ear cress).